We begin with the raw amino-acid sequence, 185 residues long: Ribosome-recycling factor (185 aa).

The protein belongs to the RRF family.

It localises to the cytoplasm. Functionally, responsible for the release of ribosomes from messenger RNA at the termination of protein biosynthesis. May increase the efficiency of translation by recycling ribosomes from one round of translation to another. In Shewanella woodyi (strain ATCC 51908 / MS32), this protein is Ribosome-recycling factor.